The primary structure comprises 73 residues: MNLETPSQENLDFMLAEITTKLKMVNVGVFENLELDSVDYNALTDIYQLIKRKSNFSPREMQLFAEELRRIRK.

It belongs to the UPF0435 family.

This Listeria innocua serovar 6a (strain ATCC BAA-680 / CLIP 11262) protein is UPF0435 protein lin1819.